An 872-amino-acid polypeptide reads, in one-letter code: Cyanophycin synthetase (872 aa).

The region spanning 224–480 (KTILQDAGVP…VAAPVMDMLF (257 aa)) is the ATP-grasp domain. 495–501 (GTNGKTT) provides a ligand contact to ATP.

In the C-terminal section; belongs to the MurCDEF family. In terms of assembly, homodimer.

The catalysed reaction is [L-4-(L-arginin-2-N-yl)aspartate](n) + L-aspartate + ATP = [L-4-(L-arginin-2-N-yl)aspartate](n)-L-aspartate + ADP + phosphate + H(+). It carries out the reaction [L-4-(L-arginin-2-N-yl)aspartate](n)-L-aspartate + L-arginine + ATP = [L-4-(L-arginin-2-N-yl)aspartate](n+1) + ADP + phosphate + H(+). Functionally, catalyzes the ATP-dependent polymerization of arginine and aspartate to multi-L-arginyl-poly-L-aspartic acid (cyanophycin; a water-insoluble reserve polymer). The chain is Cyanophycin synthetase (cphA) from Crocosphaera subtropica (strain ATCC 51142 / BH68) (Cyanothece sp. (strain ATCC 51142)).